We begin with the raw amino-acid sequence, 311 residues long: Protoheme IX farnesyltransferase 1 (311 aa).

Helical transmembrane passes span 31-51 (VMALAVFTAFVGLMVAPGAVN), 52-72 (PVIAVIAIAAIAIGAGAAGAL), 97-117 (VTPGEALGFGLVLSALSVMTL), 119-139 (VLVGWLAASLLAFTIFFYIVI), 152-172 (IVIGGAAGALPPVIGWAAATG), 179-199 (LVLFLIIFLWTPPHFWALALF), 225-245 (ILAYALLLAPVGVLPWAFGFT), 247-267 (GYYGIASAALGVGFIWHSWKV), and 281-301 (LFAYSIVYLFAVFAALLADTI).

This sequence belongs to the UbiA prenyltransferase family. Protoheme IX farnesyltransferase subfamily.

It localises to the cell inner membrane. It carries out the reaction heme b + (2E,6E)-farnesyl diphosphate + H2O = Fe(II)-heme o + diphosphate. The protein operates within porphyrin-containing compound metabolism; heme O biosynthesis; heme O from protoheme: step 1/1. Functionally, converts heme B (protoheme IX) to heme O by substitution of the vinyl group on carbon 2 of heme B porphyrin ring with a hydroxyethyl farnesyl side group. This is Protoheme IX farnesyltransferase 1 from Mesorhizobium japonicum (strain LMG 29417 / CECT 9101 / MAFF 303099) (Mesorhizobium loti (strain MAFF 303099)).